Reading from the N-terminus, the 446-residue chain is tRNA-2-methylthio-N(6)-dimethylallyladenosine synthase (446 aa).

One can recognise an MTTase N-terminal domain in the interval 2 to 122 (KKAYVKSYGC…LPDLLRQSRE (121 aa)). 6 residues coordinate [4Fe-4S] cluster: C11, C47, C85, C157, C161, and C164. In terms of domain architecture, Radical SAM core spans 143–375 (RNRGVTGFLT…QDLLDRQRHA (233 aa)). Residues 378 to 440 (AASVGTLTEI…SNSLFGEALE (63 aa)) form the TRAM domain.

The protein belongs to the methylthiotransferase family. MiaB subfamily. Monomer. The cofactor is [4Fe-4S] cluster.

The protein resides in the cytoplasm. The catalysed reaction is N(6)-dimethylallyladenosine(37) in tRNA + (sulfur carrier)-SH + AH2 + 2 S-adenosyl-L-methionine = 2-methylsulfanyl-N(6)-dimethylallyladenosine(37) in tRNA + (sulfur carrier)-H + 5'-deoxyadenosine + L-methionine + A + S-adenosyl-L-homocysteine + 2 H(+). Its function is as follows. Catalyzes the methylthiolation of N6-(dimethylallyl)adenosine (i(6)A), leading to the formation of 2-methylthio-N6-(dimethylallyl)adenosine (ms(2)i(6)A) at position 37 in tRNAs that read codons beginning with uridine. The polypeptide is tRNA-2-methylthio-N(6)-dimethylallyladenosine synthase (Methylorubrum extorquens (strain CM4 / NCIMB 13688) (Methylobacterium extorquens)).